Here is a 613-residue protein sequence, read N- to C-terminus: Isocitrate dehydrogenase kinase/phosphatase (613 aa).

ATP-binding positions include 328 to 334 (APGIRGL) and Lys-349. Asp-384 is an active-site residue.

Belongs to the AceK family.

It localises to the cytoplasm. The catalysed reaction is L-seryl-[isocitrate dehydrogenase] + ATP = O-phospho-L-seryl-[isocitrate dehydrogenase] + ADP + H(+). Bifunctional enzyme which can phosphorylate or dephosphorylate isocitrate dehydrogenase (IDH) on a specific serine residue. This is a regulatory mechanism which enables bacteria to bypass the Krebs cycle via the glyoxylate shunt in response to the source of carbon. When bacteria are grown on glucose, IDH is fully active and unphosphorylated, but when grown on acetate or ethanol, the activity of IDH declines drastically concomitant with its phosphorylation. This is Isocitrate dehydrogenase kinase/phosphatase from Cupriavidus necator (strain ATCC 17699 / DSM 428 / KCTC 22496 / NCIMB 10442 / H16 / Stanier 337) (Ralstonia eutropha).